The sequence spans 181 residues: Protein GrpE (181 aa).

The protein belongs to the GrpE family. In terms of assembly, homodimer.

Its subcellular location is the cytoplasm. In terms of biological role, participates actively in the response to hyperosmotic and heat shock by preventing the aggregation of stress-denatured proteins, in association with DnaK and GrpE. It is the nucleotide exchange factor for DnaK and may function as a thermosensor. Unfolded proteins bind initially to DnaJ; upon interaction with the DnaJ-bound protein, DnaK hydrolyzes its bound ATP, resulting in the formation of a stable complex. GrpE releases ADP from DnaK; ATP binding to DnaK triggers the release of the substrate protein, thus completing the reaction cycle. Several rounds of ATP-dependent interactions between DnaJ, DnaK and GrpE are required for fully efficient folding. In Verminephrobacter eiseniae (strain EF01-2), this protein is Protein GrpE.